Reading from the N-terminus, the 459-residue chain is tRNA modification GTPase MnmE (459 aa).

Positions 21, 84, and 123 each coordinate (6S)-5-formyl-5,6,7,8-tetrahydrofolate. The TrmE-type G domain maps to 219–378 (GVTVALAGAV…LLVLLYNFVL (160 aa)). GTP is bound by residues 229 to 234 (NAGKSS), 248 to 254 (TEHPGTT), and 273 to 276 (DTAG). Residues S233 and T254 each contribute to the Mg(2+) site. K459 serves as a coordination point for (6S)-5-formyl-5,6,7,8-tetrahydrofolate.

It belongs to the TRAFAC class TrmE-Era-EngA-EngB-Septin-like GTPase superfamily. TrmE GTPase family. As to quaternary structure, homodimer. Heterotetramer of two MnmE and two MnmG subunits. The cofactor is K(+).

It localises to the cytoplasm. Exhibits a very high intrinsic GTPase hydrolysis rate. Involved in the addition of a carboxymethylaminomethyl (cmnm) group at the wobble position (U34) of certain tRNAs, forming tRNA-cmnm(5)s(2)U34. This Lawsonia intracellularis (strain PHE/MN1-00) protein is tRNA modification GTPase MnmE.